Here is a 441-residue protein sequence, read N- to C-terminus: Velvet complex subunit B (441 aa).

Polar residues-rich tracts occupy residues 1-14 (MNPG…QPGH) and 60-75 (MMQQ…STTE). Residues 1–104 (MNPGYSSTAS…QPHVGEQDGR (104 aa)) form a disordered region. The Velvet domain maps to 100–426 (EQDGRKYRLD…AGQGIKIPIR (327 aa)).

It belongs to the velvet family. VelB subfamily. In terms of assembly, component of the heterotrimeric velvet complex composed of LAEA, VEA and VELB; VEA acting as a bridging protein between LAEA and VELB. Forms a heterodimeric complex with VOSA; the formation of the VELB-VOSA complex is light-dependent.

Its subcellular location is the nucleus. It is found in the cytoplasm. Its function is as follows. Component of the velvet transcription factor complex that controls sexual/asexual developmental ratio in response to light, promoting sexual development in the darkness while stimulating asexual sporulation under illumination. The velvet complex acts as a global regulator for secondary metabolite gene expression. Component of the VELB-VOSA heterodimeric complex that plays a dual role in activating genes associated with spore maturation and repressing certain development-associated genes. The VELB-VOSA complex binds DNA through the DNA-binding domain of VOSA that recognizes an 11-nucleotide consensus sequence 5'-CTGGCCGCGGC-3' consisting of two motifs in the promoters of key developmental regulatory genes. Involved in the regulation of the response to eactive oxygen species (ROS) stress. The sequence is that of Velvet complex subunit B from Pyricularia oryzae (strain 70-15 / ATCC MYA-4617 / FGSC 8958) (Rice blast fungus).